A 200-amino-acid polypeptide reads, in one-letter code: 3-isopropylmalate dehydratase small subunit (200 aa).

It belongs to the LeuD family. LeuD type 1 subfamily. Heterodimer of LeuC and LeuD.

The enzyme catalyses (2R,3S)-3-isopropylmalate = (2S)-2-isopropylmalate. It functions in the pathway amino-acid biosynthesis; L-leucine biosynthesis; L-leucine from 3-methyl-2-oxobutanoate: step 2/4. Catalyzes the isomerization between 2-isopropylmalate and 3-isopropylmalate, via the formation of 2-isopropylmaleate. This is 3-isopropylmalate dehydratase small subunit from Serratia proteamaculans (strain 568).